The primary structure comprises 451 residues: Phosphoglucosamine mutase (451 aa).

The active-site Phosphoserine intermediate is S107. Mg(2+) contacts are provided by S107, D246, D248, and D250. S107 is modified (phosphoserine).

Belongs to the phosphohexose mutase family. It depends on Mg(2+) as a cofactor. Post-translationally, activated by phosphorylation.

It catalyses the reaction alpha-D-glucosamine 1-phosphate = D-glucosamine 6-phosphate. Catalyzes the conversion of glucosamine-6-phosphate to glucosamine-1-phosphate. This chain is Phosphoglucosamine mutase, found in Burkholderia ambifaria (strain ATCC BAA-244 / DSM 16087 / CCUG 44356 / LMG 19182 / AMMD) (Burkholderia cepacia (strain AMMD)).